The following is a 20-amino-acid chain: FIGTALGIASAIPAIVKLFK.

The residue at position 20 (lysine 20) is a Lysine amide.

In terms of tissue distribution, expressed by the venom gland.

It is found in the secreted. It localises to the target cell membrane. Has activity against Gram-positive bacteria. Has insecticidal and hemolytic activities. May act by disrupting the integrity of the bacterial cell membrane. In Neoponera goeldii (Ponerine ant), this protein is M-poneritoxin-Ng1f.